The sequence spans 1563 residues: Pentafunctional AROM polypeptide (1563 aa).

Residues 1–382 form a 3-dehydroquinate synthase region; sequence MAEPISNPTR…YEPKASVVED (382 aa). Residues 48-50, 82-85, 113-115, and Asp118 each bind NAD(+); these read DTN, EYSK, and GGV. Arg129 serves as a coordination point for 7-phospho-2-dehydro-3-deoxy-D-arabino-heptonate. Position 138 to 139 (138 to 139) interacts with NAD(+); that stretch reads TT. 7-phospho-2-dehydro-3-deoxy-D-arabino-heptonate-binding residues include Asp145 and Lys151. An NAD(+)-binding site is contributed by Lys160. Residue Asn161 coordinates 7-phospho-2-dehydro-3-deoxy-D-arabino-heptonate. NAD(+) is bound by residues 178 to 181 and Asn189; that span reads FLNT. Glu193 lines the Zn(2+) pocket. 7-phospho-2-dehydro-3-deoxy-D-arabino-heptonate is bound by residues 193-196 and Lys248; that span reads EVIK. The active-site Proton acceptor; for 3-dehydroquinate synthase activity is the Glu258. 7-phospho-2-dehydro-3-deoxy-D-arabino-heptonate contacts are provided by residues 262–266 and His269; that span reads RNLLN. His269 serves as a coordination point for Zn(2+). His273 serves as the catalytic Proton acceptor; for 3-dehydroquinate synthase activity. Residues His285 and Lys354 each contribute to the 7-phospho-2-dehydro-3-deoxy-D-arabino-heptonate site. His285 provides a ligand contact to Zn(2+). Positions 395–834 are EPSP synthase; the sequence is VFAGVPKDLN…WDTMSNYFKV (440 aa). Catalysis depends on Cys816, which acts as the For EPSP synthase activity. Positions 857-1051 are shikimate kinase; it reads PKSIFIIGMR…KKKPHSFFVS (195 aa). 864 to 871 provides a ligand contact to ATP; sequence GMRGAGKS. The interval 1052–1265 is 3-dehydroquinase; the sequence is LTVPNVSKAL…AAPGQLSAAE (214 aa). Catalysis depends on His1168, which acts as the Proton acceptor; for 3-dehydroquinate dehydratase activity. The active-site Schiff-base intermediate with substrate; for 3-dehydroquinate dehydratase activity is the Lys1196. Residues 1278-1563 are shikimate dehydrogenase; sequence PRSFHLFGNP…TDAQAAVMGN (286 aa).

It in the N-terminal section; belongs to the sugar phosphate cyclases superfamily. Dehydroquinate synthase family. This sequence in the 2nd section; belongs to the EPSP synthase family. The protein in the 3rd section; belongs to the shikimate kinase family. In the 4th section; belongs to the type-I 3-dehydroquinase family. It in the C-terminal section; belongs to the shikimate dehydrogenase family. Homodimer. Zn(2+) is required as a cofactor.

It is found in the cytoplasm. The catalysed reaction is 7-phospho-2-dehydro-3-deoxy-D-arabino-heptonate = 3-dehydroquinate + phosphate. The enzyme catalyses 3-dehydroquinate = 3-dehydroshikimate + H2O. It carries out the reaction shikimate + NADP(+) = 3-dehydroshikimate + NADPH + H(+). It catalyses the reaction shikimate + ATP = 3-phosphoshikimate + ADP + H(+). The catalysed reaction is 3-phosphoshikimate + phosphoenolpyruvate = 5-O-(1-carboxyvinyl)-3-phosphoshikimate + phosphate. It participates in metabolic intermediate biosynthesis; chorismate biosynthesis; chorismate from D-erythrose 4-phosphate and phosphoenolpyruvate: step 2/7. Its pathway is metabolic intermediate biosynthesis; chorismate biosynthesis; chorismate from D-erythrose 4-phosphate and phosphoenolpyruvate: step 3/7. It functions in the pathway metabolic intermediate biosynthesis; chorismate biosynthesis; chorismate from D-erythrose 4-phosphate and phosphoenolpyruvate: step 4/7. The protein operates within metabolic intermediate biosynthesis; chorismate biosynthesis; chorismate from D-erythrose 4-phosphate and phosphoenolpyruvate: step 5/7. It participates in metabolic intermediate biosynthesis; chorismate biosynthesis; chorismate from D-erythrose 4-phosphate and phosphoenolpyruvate: step 6/7. In terms of biological role, the AROM polypeptide catalyzes 5 consecutive enzymatic reactions in prechorismate polyaromatic amino acid biosynthesis. This is Pentafunctional AROM polypeptide from Neurospora crassa (strain ATCC 24698 / 74-OR23-1A / CBS 708.71 / DSM 1257 / FGSC 987).